Here is a 441-residue protein sequence, read N- to C-terminus: Na(+)/H(+) antiporter NhaA 2 (441 aa).

Helical transmembrane passes span 34-54 (VGGAVLLVASAVALVWANSPW), 77-97 (LTLGTWAADGLLAVFFLVVGL), 115-135 (ALPMAAAVGGMVVPALIFVAV), 146-166 (GWAIPTATDIAFAVAVLAVIS), 176-196 (FLLTLAVVDDLLAVTVIAVFY), 199-219 (EINLTALGLSIVPLALFALCV), 225-245 (SWWLLLPLGVATWVLMHESGV), 249-269 (VAGVLLGFTVPVLRSVAAGGP), 290-310 (VAVPVFAFFAAGVAIGGVSGL), 317-337 (PITLGIILGLVVGKPVGIFLT), 355-375 (WIDVFGVALLAGIGFTVSLLI), and 389-409 (FVKVGVLTGSLVAALIAAVLL).

The protein belongs to the NhaA Na(+)/H(+) (TC 2.A.33) antiporter family.

It is found in the cell membrane. It carries out the reaction Na(+)(in) + 2 H(+)(out) = Na(+)(out) + 2 H(+)(in). Functionally, na(+)/H(+) antiporter that extrudes sodium in exchange for external protons. The sequence is that of Na(+)/H(+) antiporter NhaA 2 from Mycobacterium sp. (strain MCS).